Reading from the N-terminus, the 311-residue chain is Probable manganese-dependent inorganic pyrophosphatase (311 aa).

6 residues coordinate Mn(2+): histidine 9, aspartate 13, aspartate 15, aspartate 77, histidine 99, and aspartate 151.

It belongs to the PPase class C family. Mn(2+) serves as cofactor.

Its subcellular location is the cytoplasm. It carries out the reaction diphosphate + H2O = 2 phosphate + H(+). This is Probable manganese-dependent inorganic pyrophosphatase from Streptococcus pyogenes serotype M49 (strain NZ131).